Reading from the N-terminus, the 295-residue chain is Nucleotide-binding protein LSEI_0959 (295 aa).

Gly-12 to Thr-19 contributes to the ATP binding site. Asp-62–Ser-65 lines the GTP pocket.

It belongs to the RapZ-like family.

Functionally, displays ATPase and GTPase activities. This is Nucleotide-binding protein LSEI_0959 from Lacticaseibacillus paracasei (strain ATCC 334 / BCRC 17002 / CCUG 31169 / CIP 107868 / KCTC 3260 / NRRL B-441) (Lactobacillus paracasei).